The following is a 222-amino-acid chain: Probable RNA 2'-phosphotransferase (222 aa).

The protein belongs to the KptA/TPT1 family.

Removes the 2'-phosphate from RNA via an intermediate in which the phosphate is ADP-ribosylated by NAD followed by a presumed transesterification to release the RNA and generate ADP-ribose 1''-2''-cyclic phosphate (APPR&gt;P). May function as an ADP-ribosylase. The polypeptide is Probable RNA 2'-phosphotransferase (Haloarcula marismortui (strain ATCC 43049 / DSM 3752 / JCM 8966 / VKM B-1809) (Halobacterium marismortui)).